Here is a 218-residue protein sequence, read N- to C-terminus: Large ribosomal subunit protein uL3c (218 aa).

The tract at residues Gly127–Met161 is disordered.

Belongs to the universal ribosomal protein uL3 family. In terms of assembly, part of the 50S ribosomal subunit.

It is found in the plastid. Its subcellular location is the organellar chromatophore. One of the primary rRNA binding proteins, it binds directly near the 3'-end of the 23S rRNA, where it nucleates assembly of the 50S subunit. In Paulinella chromatophora, this protein is Large ribosomal subunit protein uL3c (rpl3).